Consider the following 24-residue polypeptide: SM-11044-binding protein (24 aa).

May mediate relaxation of depolarized colon tonus. It binds iodocyanopindolol and SM-11044. The polypeptide is SM-11044-binding protein (Rattus norvegicus (Rat)).